The primary structure comprises 472 residues: Phosphoglucosamine mutase (472 aa).

The Phosphoserine intermediate role is filled by S123. Mg(2+) is bound by residues S123, D262, D264, and D266. S123 is subject to Phosphoserine.

Belongs to the phosphohexose mutase family. Mg(2+) serves as cofactor. Post-translationally, activated by phosphorylation.

It carries out the reaction alpha-D-glucosamine 1-phosphate = D-glucosamine 6-phosphate. In terms of biological role, catalyzes the conversion of glucosamine-6-phosphate to glucosamine-1-phosphate. The chain is Phosphoglucosamine mutase from Synechococcus elongatus (strain ATCC 33912 / PCC 7942 / FACHB-805) (Anacystis nidulans R2).